The sequence spans 164 residues: MINALGLLEVDGMVAAVDAADAMLKAANVRLLSHQVLDPGRLTLVVEGDLAACRAALDAGSAAAQRTGRVISRKEIGRPEEDTQWLIGGFARATTPTEKAPQVPATPEFAEALLALLASVRQGMTAGEVAAHFGWPLEQARNVLEQLFSDGALRKRSSRYRIKN.

The BMC domain occupies 4-88 (ALGLLEVDGM…PEEDTQWLIG (85 aa)). One can recognise a EutK-Ctail domain in the interval 108–164 (EFAEALLALLASVRQGMTAGEVAAHFGWPLEQARNVLEQLFSDGALRKRSSRYRIKN).

This sequence belongs to the bacterial microcompartments protein family. Monomeric in solution.

The protein resides in the bacterial microcompartment. It functions in the pathway amine and polyamine degradation; ethanolamine degradation. Functionally, a component of the bacterial microcompartment (BMC) shell dedicated to ethanolamine degradation. Expression of eutK, eutL, eutM, eutN, eutS (eutSMNLK) in E.coli leads to formation of a single BMC. Coexpression of eutQ with eutSMNLK permits E.coli to make cells with more than one mobile BMC, as is usual in vivo. Its function is as follows. The ethanolamine (EA) catabolic bacterial microcompartment (BMC) probably concentrates low levels of ethanolamine catabolic enzymes, concentrates volatile reaction intermediates, keeps the level of toxic acetaldehyde low, generates enough acetyl-CoA to support cell growth, and maintains a pool of free coenzyme A (CoA) and NAD. Deletion of BMC genes (eutK, eutL, eutM) restores growth of eutD deletions, suggesting there are dedicated pools of coenzyme A (CoA) and NAD in the BMC. Expression of the eut operon allows this bacteria to use ethanolamine as a carbon, nitrogen and energy source. It relies on cobalamin (vitamin B12) both as a cofactor for the ethanolamine ammonia-lyase (EAL) activity and to induce the operon. EA enhances bacterial survival in macrophages in a concentration-dependent manner, suggesting it is an important nutrient during infection. The polypeptide is Bacterial microcompartment shell protein EutK (eutK) (Salmonella typhimurium (strain LT2 / SGSC1412 / ATCC 700720)).